Reading from the N-terminus, the 233-residue chain is C-type lectin domain family 2 member D5 (233 aa).

Residues methionine 1–isoleucine 52 form a disordered region. The Cytoplasmic portion of the chain corresponds to methionine 1–cysteine 76. A compositionally biased stretch (polar residues) spans arginine 16 to glutamine 29. Over residues serine 30–serine 50 the composition is skewed to low complexity. Residues cysteine 77–valine 97 form a helical; Signal-anchor for type II membrane protein membrane-spanning segment. Residues lysine 98–leucine 233 are Extracellular-facing. The C-type lectin domain occupies valine 119–tyrosine 228. An N-linked (GlcNAc...) asparagine glycan is attached at asparagine 132.

Its subcellular location is the cell membrane. Functionally, lectin-type cell surface receptor. The sequence is that of C-type lectin domain family 2 member D5 (Ocil) from Rattus norvegicus (Rat).